Here is a 418-residue protein sequence, read N- to C-terminus: Intracellular coagulation inhibitor 1 (418 aa).

An N-terminal signal peptide occupies residues 1-24 (MKLGDWKFCLLLFQLMFLTNVCLS). N-linked (GlcNAc...) asparagine glycans are attached at residues asparagine 49 and asparagine 404.

Belongs to the serpin family. Monomer. Forms a covalent heterodimer with clotting factor C. Interacts with big defensin. N-glycosylated. Expressed in hemocytes (at protein level).

Its subcellular location is the secreted. In terms of biological role, serine protease inhibitor that specifically inhibits clotting factor C. Does not inhibit clotting factor B or proclotting enzyme. This is Intracellular coagulation inhibitor 1 from Tachypleus tridentatus (Japanese horseshoe crab).